Consider the following 106-residue polypeptide: Small ribosomal subunit protein uS10 (106 aa).

The protein belongs to the universal ribosomal protein uS10 family. In terms of assembly, part of the 30S ribosomal subunit.

Involved in the binding of tRNA to the ribosomes. The polypeptide is Small ribosomal subunit protein uS10 (Mesomycoplasma hyopneumoniae (strain 232) (Mycoplasma hyopneumoniae)).